The chain runs to 490 residues: MFALTAYRLRCAAWLLATGIFLLLAGCSEAKAPTALERVQKEGVLRVVTRNSPATYFQDRNGETGFEYELAKRFAERLGVELKIETADNLDDLYAQLSRAGGPALAAAGLTPGRQDDASVRYSHTYLDVTPQVIYRNGQQRPTRPEDLVGKRIMVLKGSSHAAQLAELKKQYPELKYDESDAVEVVDLLRMVDVGDIDLTLVDSNELAMNQVYFPNVRVAFDFGEARGLAWALPGGDDDSLMNEVNAFLDQAKKEGLLQRLKDRYYGHVDVLGYVGAYTFAQHLQQRLPRYESHFKQSGKQLDTDWRLLAAIGYQESLWQPSATSKTGVRGLMMLTNRTAQAMGVSNRLDPKQSIQGGSKYFVQIRSELPESIREPDRSWFALAAYNIGGAHLEDARKMAEKEGLNPNKWLDVKKMLPRLAQKRWYAKTRYGYARGGETVHFVQNVRRYYDILTWVTQPQMEGSQIAESGLHLPGVNKTRPDDDEGDGKL.

Residues 1–32 (MFALTAYRLRCAAWLLATGIFLLLAGCSEAKA) form the signal peptide. Residues 33-269 (PTALERVQKE…RLKDRYYGHV (237 aa)) are non-LT domain. The interval 270-490 (DVLGYVGAYT…PDDDEGDGKL (221 aa)) is LT domain. The active site involves Glu-316. Residues 467–490 (AESGLHLPGVNKTRPDDDEGDGKL) form a disordered region.

This sequence in the N-terminal section; belongs to the bacterial solute-binding protein 3 family. It in the C-terminal section; belongs to the transglycosylase Slt family.

The protein localises to the cell outer membrane. It carries out the reaction Exolytic cleavage of the (1-&gt;4)-beta-glycosidic linkage between N-acetylmuramic acid (MurNAc) and N-acetylglucosamine (GlcNAc) residues in peptidoglycan, from either the reducing or the non-reducing ends of the peptidoglycan chains, with concomitant formation of a 1,6-anhydrobond in the MurNAc residue.. Functionally, murein-degrading enzyme that degrades murein glycan strands and insoluble, high-molecular weight murein sacculi, with the concomitant formation of a 1,6-anhydromuramoyl product. Lytic transglycosylases (LTs) play an integral role in the metabolism of the peptidoglycan (PG) sacculus. Their lytic action creates space within the PG sacculus to allow for its expansion as well as for the insertion of various structures such as secretion systems and flagella. The polypeptide is Membrane-bound lytic murein transglycosylase F (Pseudomonas paraeruginosa (strain DSM 24068 / PA7) (Pseudomonas aeruginosa (strain PA7))).